The chain runs to 793 residues: Endonuclease MutS2 (793 aa).

335 to 342 (GPNTGGKT) contributes to the ATP binding site. The region spanning 718–793 (IDVRGYNLEE…ESGVTIVELR (76 aa)) is the Smr domain.

This sequence belongs to the DNA mismatch repair MutS family. MutS2 subfamily. As to quaternary structure, homodimer. Binds to stalled ribosomes, contacting rRNA.

Functionally, endonuclease that is involved in the suppression of homologous recombination and thus may have a key role in the control of bacterial genetic diversity. Acts as a ribosome collision sensor, splitting the ribosome into its 2 subunits. Detects stalled/collided 70S ribosomes which it binds and splits by an ATP-hydrolysis driven conformational change. Acts upstream of the ribosome quality control system (RQC), a ribosome-associated complex that mediates the extraction of incompletely synthesized nascent chains from stalled ribosomes and their subsequent degradation. Probably generates substrates for RQC. The protein is Endonuclease MutS2 of Acetivibrio thermocellus (strain ATCC 27405 / DSM 1237 / JCM 9322 / NBRC 103400 / NCIMB 10682 / NRRL B-4536 / VPI 7372) (Clostridium thermocellum).